We begin with the raw amino-acid sequence, 461 residues long: Diacylglycerol O-acyltransferase 1 (461 aa).

The disordered stretch occupies residues 1 to 38 (MQDSMDDSLREAEGRQDDSEVSSGTTLGSSTPEDSGVT). Over 1–112 (MQDSMDDSLR…TLVVAWHTSS (112 aa)) the chain is Cytoplasmic. Positions 7–18 (DSLREAEGRQDD) are enriched in basic and acidic residues. The span at 21–33 (VSSGTTLGSSTPE) shows a compositional bias: polar residues. Residues 113 to 133 (FIYMTVLVLFLAANPLMWWFM) traverse the membrane as a helical segment. The Lumenal portion of the chain corresponds to 134-230 (VPYMVYYVWN…ARPQVATGPR (97 aa)). The helical transmembrane segment at 231 to 251 (YIFGYHPHGVGALGAFGAIAT) threads the bilayer. The Cytoplasmic portion of the chain corresponds to 252–258 (EGCNWSK). The helical transmembrane segment at 259–279 (VFAGIPACLCTLVNQFQIPIY) threads the bilayer. Residues 280 to 332 (RDYLLGLGCTSVARKNVLKVLEQNYSVCIVVGGAQEALLSRVGSTELVLNKRK) are Lumenal-facing. Residues 333-353 (GFIKLALETGNVNLVPIYAFG) form a helical membrane-spanning segment. At 354–461 (ETDCFNVLDT…YAGKELKIVE (108 aa)) the chain is on the cytoplasmic side.

This sequence belongs to the diacylglycerol acyltransferase family.

The protein resides in the lipid droplet. It localises to the endoplasmic reticulum membrane. The catalysed reaction is an acyl-CoA + a 1,2-diacyl-sn-glycerol = a triacyl-sn-glycerol + CoA. It catalyses the reaction a 2-acylglycerol + an acyl-CoA = a 1,2-diacyl-sn-glycerol + CoA. The protein operates within glycerolipid metabolism; triacylglycerol biosynthesis. Catalyzes the terminal and only committed step in triacylglycerol (TAG) synthesis by using diacylglycerol (DAG) and fatty acyl-CoA as substrates. Required for storage lipid synthesis. Major DAG esterifying enzyme in stationary phase when TAG production is particularly active. Involved in lipid particle synthesis from the endoplasmic reticulum, promoting localized TAG production at discrete ER subdomains. This Eremothecium gossypii (strain ATCC 10895 / CBS 109.51 / FGSC 9923 / NRRL Y-1056) (Yeast) protein is Diacylglycerol O-acyltransferase 1 (DGA1).